The sequence spans 384 residues: Ceramide very long chain fatty acid hydroxylase SCS7 (384 aa).

Over 1 to 197 the chain is Cytoplasmic; it reads MSTNTSKTLE…NFLEPLTKTA (197 aa). Positions 9 to 90 constitute a Cytochrome b5 heme-binding domain; sequence LELFSKKTVQ…EDEYLIGYLA (82 aa). Heme contacts are provided by H45 and H72. The chain crosses the membrane as a helical span at residues 198-216; it reads WWVVPVAWLPVVVYHMGVA. The Lumenal portion of the chain corresponds to 217 to 221; that stretch reads LKNMN. The helical transmembrane segment at 222-246 threads the bilayer; that stretch reads QLFACFLFCVGVFVWTLIEYGLHRF. The Zn(2+) site is built by H244, H249, H268, H271, and H272. At 247-284 the chain is on the cytoplasmic side; it reads LFHFDDWLPESNIAFATHFLLHGCHHYLPMDKYRLVMP. A helical membrane pass occupies residues 285–302; the sequence is PTLFVILCAPFYKLVFAL. At 303-304 the chain is on the lumenal side; that stretch reads LP. Residues 305 to 328 traverse the membrane as a helical segment; that stretch reads LYWAYAGFAGGLFGYVCYDECHFF. Positions 326, 330, 345, 348, and 349 each coordinate Zn(2+). The Cytoplasmic segment spans residues 329–384; that stretch reads LHHSKLPPFMRKLKKYHLEHHYKNYQLGFGVTSWFWDEVFGTYLGPDAPLSKMKYE.

This sequence belongs to the sterol desaturase family. SCS7 subfamily. Zn(2+) is required as a cofactor.

It localises to the endoplasmic reticulum membrane. It catalyses the reaction an N-(1,2 saturated acyl)-(4R)-hydroxysphinganine + 2 Fe(II)-[cytochrome b5] + O2 + 2 H(+) = an N-(2R-hydroxyacyl)-4R-hydroxysphinganine + 2 Fe(III)-[cytochrome b5] + H2O. The catalysed reaction is an N-(1,2-saturated acyl)sphinganine + 2 Fe(II)-[cytochrome b5] + O2 + 2 H(+) = an N-[(2'R)-hydroxyacyl]sphinganine + 2 Fe(III)-[cytochrome b5] + H2O. The enzyme catalyses N-hexacosanoyl-(4R)-hydroxysphinganine + 2 Fe(II)-[cytochrome b5] + O2 + 2 H(+) = N-(2-hydroxyhexacosanyl)-(4R)-hydroxysphinganine + 2 Fe(III)-[cytochrome b5] + H2O. It participates in sphingolipid metabolism. Ceramide hydroxylase involved in the hydroxylation of sphingolipid-associated very long chain fatty acids. Postulated to hydroxylate the very long chain fatty acid of dihydroceramides and phytoceramides at C-2. This is Ceramide very long chain fatty acid hydroxylase SCS7 from Saccharomyces cerevisiae (strain ATCC 204508 / S288c) (Baker's yeast).